Reading from the N-terminus, the 504-residue chain is L-carnitine/gamma-butyrobetaine antiporter (504 aa).

Transmembrane regions (helical) follow at residues 10-30 (IEPK…WLTV), 51-71 (WGWA…WLVF), 92-112 (IFMM…SIEI), 143-163 (GPLP…FFFV), 195-215 (FYLV…TPLV), 231-251 (LDAI…ACGL), 263-283 (SYLS…SFIM), 316-336 (WTVF…IFLA), 347-367 (LCFG…TVLG), 398-418 (WAAL…CFIA), 446-466 (LLVR…LLAL), and 475-495 (AIIA…LSFI).

It belongs to the BCCT transporter (TC 2.A.15) family. CaiT subfamily. In terms of assembly, homotrimer.

It is found in the cell inner membrane. It catalyses the reaction 4-(trimethylamino)butanoate(in) + (R)-carnitine(out) = 4-(trimethylamino)butanoate(out) + (R)-carnitine(in). Its pathway is amine and polyamine metabolism; carnitine metabolism. In terms of biological role, catalyzes the exchange of L-carnitine for gamma-butyrobetaine. The protein is L-carnitine/gamma-butyrobetaine antiporter of Escherichia coli (strain K12 / MC4100 / BW2952).